An 87-amino-acid polypeptide reads, in one-letter code: Small ribosomal subunit protein bS16 (87 aa).

This sequence belongs to the bacterial ribosomal protein bS16 family.

In Psychrobacter sp. (strain PRwf-1), this protein is Small ribosomal subunit protein bS16.